A 95-amino-acid chain; its full sequence is Aspartyl/glutamyl-tRNA(Asn/Gln) amidotransferase subunit C (95 aa).

The protein belongs to the GatC family. In terms of assembly, heterotrimer of A, B and C subunits.

It carries out the reaction L-glutamyl-tRNA(Gln) + L-glutamine + ATP + H2O = L-glutaminyl-tRNA(Gln) + L-glutamate + ADP + phosphate + H(+). The enzyme catalyses L-aspartyl-tRNA(Asn) + L-glutamine + ATP + H2O = L-asparaginyl-tRNA(Asn) + L-glutamate + ADP + phosphate + 2 H(+). Its function is as follows. Allows the formation of correctly charged Asn-tRNA(Asn) or Gln-tRNA(Gln) through the transamidation of misacylated Asp-tRNA(Asn) or Glu-tRNA(Gln) in organisms which lack either or both of asparaginyl-tRNA or glutaminyl-tRNA synthetases. The reaction takes place in the presence of glutamine and ATP through an activated phospho-Asp-tRNA(Asn) or phospho-Glu-tRNA(Gln). The sequence is that of Aspartyl/glutamyl-tRNA(Asn/Gln) amidotransferase subunit C from Methylobacterium radiotolerans (strain ATCC 27329 / DSM 1819 / JCM 2831 / NBRC 15690 / NCIMB 10815 / 0-1).